The primary structure comprises 189 residues: Large ribosomal subunit protein uL10 (189 aa).

This sequence belongs to the universal ribosomal protein uL10 family. Part of the ribosomal stalk of the 50S ribosomal subunit. The N-terminus interacts with L11 and the large rRNA to form the base of the stalk. The C-terminus forms an elongated spine to which L12 dimers bind in a sequential fashion forming a multimeric L10(L12)X complex.

Its function is as follows. Forms part of the ribosomal stalk, playing a central role in the interaction of the ribosome with GTP-bound translation factors. This chain is Large ribosomal subunit protein uL10, found in Rippkaea orientalis (strain PCC 8801 / RF-1) (Cyanothece sp. (strain PCC 8801)).